The primary structure comprises 213 residues: Virulence factor 1 (213 aa).

It localises to the host mitochondrion. Functionally, plays a role in antagonizing the host innate immune response. This is Virulence factor 1 from Norovirus (isolate Mouse/NoV/United States/MNV1/2002/GV) (MNV-1).